We begin with the raw amino-acid sequence, 439 residues long: Proline--tRNA ligase (439 aa).

Belongs to the class-II aminoacyl-tRNA synthetase family. ProS type 2 subfamily. As to quaternary structure, homodimer.

The protein resides in the cytoplasm. The enzyme catalyses tRNA(Pro) + L-proline + ATP = L-prolyl-tRNA(Pro) + AMP + diphosphate. Its function is as follows. Catalyzes the attachment of proline to tRNA(Pro) in a two-step reaction: proline is first activated by ATP to form Pro-AMP and then transferred to the acceptor end of tRNA(Pro). This is Proline--tRNA ligase from Bradyrhizobium diazoefficiens (strain JCM 10833 / BCRC 13528 / IAM 13628 / NBRC 14792 / USDA 110).